The following is a 539-amino-acid chain: Chaperonin GroEL (539 aa).

ATP-binding positions include 30-33 (TLGP), 87-91 (DGTTT), G414, 479-481 (DAL), and D495.

This sequence belongs to the chaperonin (HSP60) family. In terms of assembly, forms a cylinder of 14 subunits composed of two heptameric rings stacked back-to-back. Interacts with the co-chaperonin GroES.

The protein resides in the cytoplasm. It carries out the reaction ATP + H2O + a folded polypeptide = ADP + phosphate + an unfolded polypeptide.. In terms of biological role, together with its co-chaperonin GroES, plays an essential role in assisting protein folding. The GroEL-GroES system forms a nano-cage that allows encapsulation of the non-native substrate proteins and provides a physical environment optimized to promote and accelerate protein folding. The protein is Chaperonin GroEL of Caldicellulosiruptor bescii (strain ATCC BAA-1888 / DSM 6725 / KCTC 15123 / Z-1320) (Anaerocellum thermophilum).